The sequence spans 180 residues: ADP-ribosylation factor 4 (180 aa).

G2 is lipidated: N-myristoyl glycine. Residues 24-31 (GLDAAGKT), 67-71 (DVGGQ), and 126-129 (NKQD) each bind GTP. S147 carries the post-translational modification Phosphoserine.

This sequence belongs to the small GTPase superfamily. Arf family. Forms a complex containing RAB11A, ASAP1, RAB3IP, RAP11FIP3 and ARF4; the complex promotes preciliary trafficking; the complex binds to RHO in photoreceptor cells and promotes RHO ciliary transport.

The protein resides in the golgi apparatus. It localises to the membrane. Functionally, GTP-binding protein that functions as an allosteric activator of the cholera toxin catalytic subunit, an ADP-ribosyltransferase. Involved in protein trafficking; may modulate vesicle budding and uncoating within the Golgi apparatus. Part of the ciliary targeting complex containing Rab11, ASAP1, Rabin8/RAB3IP, RAB11FIP3 and ARF4, which direct preciliary vesicle trafficking to mother centriole and ciliogenesis initiation. This is ADP-ribosylation factor 4 (Arf4) from Mus musculus (Mouse).